Consider the following 92-residue polypeptide: Putative pterin-4-alpha-carbinolamine dehydratase (92 aa).

This sequence belongs to the pterin-4-alpha-carbinolamine dehydratase family.

It carries out the reaction (4aS,6R)-4a-hydroxy-L-erythro-5,6,7,8-tetrahydrobiopterin = (6R)-L-erythro-6,7-dihydrobiopterin + H2O. This chain is Putative pterin-4-alpha-carbinolamine dehydratase, found in Picosynechococcus sp. (strain ATCC 27264 / PCC 7002 / PR-6) (Agmenellum quadruplicatum).